Here is a 198-residue protein sequence, read N- to C-terminus: Ribonuclease HII (198 aa).

The RNase H type-2 domain maps to 10–198; it reads QLVAGVDEVG…PVKRALGLAS (189 aa). A divalent metal cation-binding residues include Asp16, Glu17, and Asp108.

Belongs to the RNase HII family. It depends on Mn(2+) as a cofactor. Mg(2+) is required as a cofactor.

Its subcellular location is the cytoplasm. The enzyme catalyses Endonucleolytic cleavage to 5'-phosphomonoester.. Its function is as follows. Endonuclease that specifically degrades the RNA of RNA-DNA hybrids. The chain is Ribonuclease HII from Shigella sonnei (strain Ss046).